A 339-amino-acid polypeptide reads, in one-letter code: NADH-quinone oxidoreductase subunit H (339 aa).

9 consecutive transmembrane segments (helical) span residues 10 to 30 (FPLTVIALKVVAITIPLILCV), 50 to 70 (PNVVGPFGLLQPIADAVKLLF), 82 to 102 (ILFILAPIITFVLSLIGWAVI), 115 to 135 (VGVLYILAISSLSVYGIIIAG), 161 to 181 (MGLVIITVLLTTGTLNLSGII), 187 to 207 (LPWWIDLMLLPMSIVFFISVL), 235 to 255 (MGFALFFLGEYANMILVSAMT), 275 to 295 (IPGFFWFVFKVGFLLFCFLWI), and 311 to 331 (GWKVFLPFTLFGVVLVSSVLF).

This sequence belongs to the complex I subunit 1 family. As to quaternary structure, NDH-1 is composed of 14 different subunits. Subunits NuoA, H, J, K, L, M, N constitute the membrane sector of the complex.

The protein localises to the cell inner membrane. It catalyses the reaction a quinone + NADH + 5 H(+)(in) = a quinol + NAD(+) + 4 H(+)(out). NDH-1 shuttles electrons from NADH, via FMN and iron-sulfur (Fe-S) centers, to quinones in the respiratory chain. The immediate electron acceptor for the enzyme in this species is believed to be ubiquinone. Couples the redox reaction to proton translocation (for every two electrons transferred, four hydrogen ions are translocated across the cytoplasmic membrane), and thus conserves the redox energy in a proton gradient. This subunit may bind ubiquinone. The polypeptide is NADH-quinone oxidoreductase subunit H (Rickettsia prowazekii (strain Madrid E)).